Reading from the N-terminus, the 387-residue chain is Phosphoglycerate kinase (387 aa).

Residues 21–23 (DLN), Arg36, 59–62 (HLGR), Arg113, and Arg146 each bind substrate. ATP-binding positions include Lys197, Glu314, and 340–343 (GGDT).

The protein belongs to the phosphoglycerate kinase family. In terms of assembly, monomer.

The protein localises to the cytoplasm. The catalysed reaction is (2R)-3-phosphoglycerate + ATP = (2R)-3-phospho-glyceroyl phosphate + ADP. Its pathway is carbohydrate degradation; glycolysis; pyruvate from D-glyceraldehyde 3-phosphate: step 2/5. This chain is Phosphoglycerate kinase, found in Aliivibrio salmonicida (strain LFI1238) (Vibrio salmonicida (strain LFI1238)).